Consider the following 264-residue polypeptide: Claudin-18 (264 aa).

At 1-6 (MATTTC) the chain is on the cytoplasmic side. A helical membrane pass occupies residues 7–27 (QVVGLLLSLLGLAGCIAATGM). The Extracellular portion of the chain corresponds to 28 to 80 (DMWSTQDLYDNPVTAVFQYEGLWRSCVQQSSGFTECRPYFTILGLPAMLQAVR). The helical transmembrane segment at 81–101 (ALMIVGIVLGVIGILVSIFAL) threads the bilayer. Residues 102 to 122 (KCIRIGSMDDSAKAKMTLTSG) are Cytoplasmic-facing. A helical transmembrane segment spans residues 123–143 (ILFIISGICAIIGVSVFANML). Over 144-176 (VTNFWMSTANMYSGMGGMGGMVQTVQTRYTFGA) the chain is Extracellular. The chain crosses the membrane as a helical span at residues 177–197 (ALFVGWVAGGLTLIGGVMMCI). Residues 198–264 (ACRGLTPDDS…QSHPTKYDYV (67 aa)) are Cytoplasmic-facing. The tract at residues 198-264 (ACRGLTPDDS…QSHPTKYDYV (67 aa)) is required for role in regulation of RANKL-induced osteoclast differentiation. Phosphoserine is present on serine 217. Residues 241 to 264 (KKIYDGGARTEDDEQSHPTKYDYV) form a disordered region. The segment covering 242 to 264 (KIYDGGARTEDDEQSHPTKYDYV) has biased composition (basic and acidic residues).

Belongs to the claudin family. In terms of assembly, interacts with TJP2/ZO-2. Interacts with TJP1/ZO-1. Interacts with YAP1 (phosphorylated); the interaction sequesters YAP1 away from the nucleus and thereby restricts transcription of YAP1 target genes. As to quaternary structure, interacts with CLDN19. As to expression, expressed in the lung (at protein level). In terms of tissue distribution, expressed in lung. Expressed in the stomach. Expressed in lung. As to expression, expressed in stomach. Expressed in bone. In terms of tissue distribution, expressed in stomach.

The protein resides in the cell junction. Its subcellular location is the tight junction. The protein localises to the cell membrane. It is found in the lateral cell membrane. In terms of biological role, involved in alveolar fluid homeostasis via regulation of alveolar epithelial tight junction composition and therefore ion transport and solute permeability, potentially via downstream regulation of the actin cytoskeleton organization and beta-2-adrenergic signaling. Required for lung alveolarization and maintenance of the paracellular alveolar epithelial barrier. Acts to maintain epithelial progenitor cell proliferation and organ size, via regulation of YAP1 localization away from the nucleus and thereby restriction of YAP1 target gene transcription. Acts as a negative regulator of RANKL-induced osteoclast differentiation, potentially via relocation of TJP2/ZO-2 away from the nucleus, subsequently involved in bone resorption in response to calcium deficiency. Mediates the osteoprotective effects of estrogen, potentially via acting downstream of estrogen signaling independently of RANKL signaling pathways. Its function is as follows. Involved in the maintenance of homeostasis of the alveolar microenvironment via regulation of pH and subsequent T-cell activation in the alveolar space, is therefore indirectly involved in limiting C.neoformans infection. Required for the formation of the gastric paracellular barrier via its role in tight junction formation, thereby involved in the response to gastric acidification. This chain is Claudin-18 (Cldn18), found in Mus musculus (Mouse).